The chain runs to 166 residues: MRLILLSGLLLLGTFLVNGHDADPEGEVLNSVLLTLMKLQKEFTNLFHAFLTVHKARSFGSGSERLYVSNKEIKNFEALKVICKQAGGQIPSPQLENQNKAFANVLERHNKEAFLVVGDSGNFTNWAAGQPNKADGTCVKADKQGFWHSTSCDDNLLVVCEFYFIL.

An N-terminal signal peptide occupies residues 1-19 (MRLILLSGLLLLGTFLVNG). The C-type lectin domain maps to 46–161 (LFHAFLTVHK…CDDNLLVVCE (116 aa)). 2 disulfide bridges follow: cysteine 83-cysteine 160 and cysteine 138-cysteine 152. Asparagine 122 is a glycosylation site (N-linked (GlcNAc...) asparagine).

Belongs to the alpha-type phospholipase A2 inhibitor family. In terms of assembly, homotrimer; non-covalently linked. Expressed by the liver.

Its subcellular location is the secreted. This phospholipase A2 inhibitor binds directly phospholipase A2 in the presence or absence of calcium. This chain is Phospholipase A2 inhibitor A4/A5, found in Crotalus durissus terrificus (South American rattlesnake).